A 334-amino-acid polypeptide reads, in one-letter code: Cathepsin J (334 aa).

The first 17 residues, 1–17 (MTPTVLLLILCFGVASG), serve as a signal peptide directing secretion. A propeptide spans 18 to 113 (AQAHDPKLDA…PHAQNHVSIG (96 aa)) (activation peptide). N-linked (GlcNAc...) asparagine glycosylation occurs at Asn72. Disulfide bonds link Cys135/Cys178 and Cys169/Cys211. The active site involves Cys138. N-linked (GlcNAc...) asparagine glycans are attached at residues Asn217, Asn221, and Asn268. Cysteines 269 and 322 form a disulfide. Active-site residues include His276 and Asn300.

This sequence belongs to the peptidase C1 family. In terms of tissue distribution, expressed specifically in placenta.

The protein resides in the lysosome. The sequence is that of Cathepsin J (Ctsj) from Mus musculus (Mouse).